The following is a 146-amino-acid chain: 3-hydroxyacyl-[acyl-carrier-protein] dehydratase FabZ (146 aa).

Residue His-49 is part of the active site.

The protein belongs to the thioester dehydratase family. FabZ subfamily.

It localises to the cytoplasm. The catalysed reaction is a (3R)-hydroxyacyl-[ACP] = a (2E)-enoyl-[ACP] + H2O. Involved in unsaturated fatty acids biosynthesis. Catalyzes the dehydration of short chain beta-hydroxyacyl-ACPs and long chain saturated and unsaturated beta-hydroxyacyl-ACPs. The sequence is that of 3-hydroxyacyl-[acyl-carrier-protein] dehydratase FabZ from Wolbachia sp. subsp. Brugia malayi (strain TRS).